Reading from the N-terminus, the 245-residue chain is 8-amino-3,8-dideoxy-manno-octulosonate cytidylyltransferase (245 aa).

This sequence belongs to the KdsB family.

The protein resides in the cytoplasm. It carries out the reaction 8-amino-3,8-dideoxy-alpha-D-manno-octulosonate + CTP = CMP-8-amino-3,8-dideoxy-alpha-D-manno-oct-2-ulosonate + diphosphate. It participates in bacterial outer membrane biogenesis; lipopolysaccharide biosynthesis. Its function is as follows. Activates KDO8N (a required 8-carbon sugar) for incorporation into bacterial lipopolysaccharide in the Shewanella genus. The sequence is that of 8-amino-3,8-dideoxy-manno-octulosonate cytidylyltransferase from Shewanella loihica (strain ATCC BAA-1088 / PV-4).